The following is a 207-amino-acid chain: Large ribosomal subunit protein uL4 (207 aa).

The interval 50–76 is disordered; it reads KTKTVSEVSGTTKKPFKQKGTGNARQG.

Belongs to the universal ribosomal protein uL4 family. As to quaternary structure, part of the 50S ribosomal subunit.

In terms of biological role, one of the primary rRNA binding proteins, this protein initially binds near the 5'-end of the 23S rRNA. It is important during the early stages of 50S assembly. It makes multiple contacts with different domains of the 23S rRNA in the assembled 50S subunit and ribosome. Forms part of the polypeptide exit tunnel. The polypeptide is Large ribosomal subunit protein uL4 (Rickettsia typhi (strain ATCC VR-144 / Wilmington)).